The chain runs to 62 residues: Conotoxin Qc5.1 (62 aa).

The signal sequence occupies residues 1–22 (MRCVPVFIILLLLSPSAPSVDA). Positions 23–48 (HPMTKDDVPQASFHDDAKRTLQVPWM) are excised as a propeptide. The residue at position 60 (V60) is a Valine amide.

The protein belongs to the conotoxin T superfamily. Contains 2 disulfide bonds that can be either 'C1-C3, C2-C4' or 'C1-C4, C2-C3', since these disulfide connectivities have been observed for conotoxins with cysteine framework V (for examples, see AC P0DQQ7 and AC P81755). As to expression, expressed by the venom duct.

It localises to the secreted. The protein is Conotoxin Qc5.1 of Conus quercinus (Oak cone).